Here is a 316-residue protein sequence, read N- to C-terminus: Transaldolase (316 aa).

Lysine 131 acts as the Schiff-base intermediate with substrate in catalysis.

The protein belongs to the transaldolase family. Type 1 subfamily. As to quaternary structure, homodimer.

The protein localises to the cytoplasm. The enzyme catalyses D-sedoheptulose 7-phosphate + D-glyceraldehyde 3-phosphate = D-erythrose 4-phosphate + beta-D-fructose 6-phosphate. It participates in carbohydrate degradation; pentose phosphate pathway; D-glyceraldehyde 3-phosphate and beta-D-fructose 6-phosphate from D-ribose 5-phosphate and D-xylulose 5-phosphate (non-oxidative stage): step 2/3. In terms of biological role, transaldolase is important for the balance of metabolites in the pentose-phosphate pathway. This chain is Transaldolase, found in Glaesserella parasuis serovar 5 (strain SH0165) (Haemophilus parasuis).